We begin with the raw amino-acid sequence, 121 residues long: Small ribosomal subunit protein uS13 (121 aa).

The disordered stretch occupies residues 93–121 (RNLPVRGQRTRTNARTCKGPRKSMNKQFK). Basic residues predominate over residues 110–121 (KGPRKSMNKQFK).

This sequence belongs to the universal ribosomal protein uS13 family. As to quaternary structure, part of the 30S ribosomal subunit. Forms a loose heterodimer with protein S19. Forms two bridges to the 50S subunit in the 70S ribosome.

Its function is as follows. Located at the top of the head of the 30S subunit, it contacts several helices of the 16S rRNA. In the 70S ribosome it contacts the 23S rRNA (bridge B1a) and protein L5 of the 50S subunit (bridge B1b), connecting the 2 subunits; these bridges are implicated in subunit movement. Contacts the tRNAs in the A and P-sites. This is Small ribosomal subunit protein uS13 from Blochmanniella pennsylvanica (strain BPEN).